We begin with the raw amino-acid sequence, 539 residues long: Putative serine/threonine-protein kinase L670 (539 aa).

Positions 1–115 constitute a Cyclin N-terminal domain; it reads MSLFNNHPEL…ILKVFKFGLH (115 aa). The Protein kinase domain maps to 258 to 519; it reads MNVIEKLGIG…VLKIFSECFV (262 aa). ATP is bound by residues 264–272 and Lys285; that span reads LGIGSFGLV. Asp375 (proton acceptor) is an active-site residue.

This sequence belongs to the protein kinase superfamily. Ser/Thr protein kinase family.

The catalysed reaction is L-seryl-[protein] + ATP = O-phospho-L-seryl-[protein] + ADP + H(+). The enzyme catalyses L-threonyl-[protein] + ATP = O-phospho-L-threonyl-[protein] + ADP + H(+). This is Putative serine/threonine-protein kinase L670 from Acanthamoeba polyphaga mimivirus (APMV).